Reading from the N-terminus, the 618-residue chain is Dihydroxy-acid dehydratase (618 aa).

D81 serves as a coordination point for Mg(2+). Position 122 (C122) interacts with [2Fe-2S] cluster. Mg(2+)-binding residues include D123 and K124. N6-carboxylysine is present on K124. C195 contacts [2Fe-2S] cluster. Position 491 (E491) interacts with Mg(2+). S517 serves as the catalytic Proton acceptor.

It belongs to the IlvD/Edd family. In terms of assembly, homodimer. [2Fe-2S] cluster serves as cofactor. Requires Mg(2+) as cofactor.

It carries out the reaction (2R)-2,3-dihydroxy-3-methylbutanoate = 3-methyl-2-oxobutanoate + H2O. The catalysed reaction is (2R,3R)-2,3-dihydroxy-3-methylpentanoate = (S)-3-methyl-2-oxopentanoate + H2O. The protein operates within amino-acid biosynthesis; L-isoleucine biosynthesis; L-isoleucine from 2-oxobutanoate: step 3/4. It functions in the pathway amino-acid biosynthesis; L-valine biosynthesis; L-valine from pyruvate: step 3/4. Functionally, functions in the biosynthesis of branched-chain amino acids. Catalyzes the dehydration of (2R,3R)-2,3-dihydroxy-3-methylpentanoate (2,3-dihydroxy-3-methylvalerate) into 2-oxo-3-methylpentanoate (2-oxo-3-methylvalerate) and of (2R)-2,3-dihydroxy-3-methylbutanoate (2,3-dihydroxyisovalerate) into 2-oxo-3-methylbutanoate (2-oxoisovalerate), the penultimate precursor to L-isoleucine and L-valine, respectively. In Dechloromonas aromatica (strain RCB), this protein is Dihydroxy-acid dehydratase.